The primary structure comprises 132 residues: Small ribosomal subunit protein uS8 (132 aa).

It belongs to the universal ribosomal protein uS8 family. Part of the 30S ribosomal subunit. Contacts proteins S5 and S12.

Functionally, one of the primary rRNA binding proteins, it binds directly to 16S rRNA central domain where it helps coordinate assembly of the platform of the 30S subunit. This is Small ribosomal subunit protein uS8 from Halalkalibacterium halodurans (strain ATCC BAA-125 / DSM 18197 / FERM 7344 / JCM 9153 / C-125) (Bacillus halodurans).